The following is a 281-amino-acid chain: Acidic leucine-rich nuclear phosphoprotein 32-related protein (281 aa).

LRR repeat units follow at residues 29-52 (YESL…EKEL), 56-78 (FKNL…IPSI), 79-103 (ATLN…IVQN), and 105-128 (PNIK…TLKE). The 39-residue stretch at 140–178 (NPFADNPNYRKELFEFLPNVKIIDCYNKEGMEVLSSDEE) folds into the LRRCT domain. Over residues 197–244 (FKDEDDEDEEFVPNDNEDDDEDDELDDDLEDEDMEDLDKEDLDKEDYD) the composition is skewed to acidic residues. The disordered stretch occupies residues 197–281 (FKDEDDEDEE…DMDLKKTKLE (85 aa)). Residues 245 to 266 (IDTKETEGVNKDEKSNKRKQDA) are compositionally biased toward basic and acidic residues.

The protein belongs to the ANP32 family.

The sequence is that of Acidic leucine-rich nuclear phosphoprotein 32-related protein from Plasmodium falciparum (isolate 3D7).